The chain runs to 177 residues: Large ribosomal subunit protein uL6 (177 aa).

This sequence belongs to the universal ribosomal protein uL6 family. Part of the 50S ribosomal subunit.

Functionally, this protein binds to the 23S rRNA, and is important in its secondary structure. It is located near the subunit interface in the base of the L7/L12 stalk, and near the tRNA binding site of the peptidyltransferase center. This chain is Large ribosomal subunit protein uL6, found in Rickettsia canadensis (strain McKiel).